The chain runs to 90 residues: Envelope protein US9 (90 aa).

Residues 1-67 (MTSRLSDPNS…RRRRTRCVGM (67 aa)) are Intravirion-facing. The Internalization motif motif lies at 21–24 (YPTA). Positions 30-39 (EAYYSESEDE) are acidic. A phosphoserine; by host CK2 mark is found at Ser34 and Ser36. A helical; Signal-anchor for type II membrane protein transmembrane segment spans residues 68 to 88 (VIACLLVAVLSGGFGALLMWL). The Virion surface portion of the chain corresponds to 89–90 (LR).

It belongs to the alphaherpesvirinae envelope protein US9 family. In terms of processing, phosphorylated on serines within the acidic cluster, possibly by host CK2. Phosphorylation determines whether endocytosed viral US9 traffics to the trans-Golgi network or recycles to the cell membrane.

The protein resides in the virion membrane. It localises to the host Golgi apparatus membrane. The protein localises to the host smooth endoplasmic reticulum membrane. It is found in the host cell membrane. In terms of biological role, essential for the anterograde spread of the infection throughout the host nervous system. Together with the gE/gI heterodimer, US9 is involved in the sorting and transport of viral structural components toward axon tips. In Homo sapiens (Human), this protein is Envelope protein US9.